Consider the following 185-residue polypeptide: Large ribosomal subunit protein uL22 (185 aa).

This sequence belongs to the universal ribosomal protein uL22 family. In terms of assembly, part of the 50S ribosomal subunit.

Functionally, this protein binds specifically to 23S rRNA. It makes multiple contacts with different domains of the 23S rRNA in the assembled 50S subunit and ribosome. In terms of biological role, the globular domain of the protein is located near the polypeptide exit tunnel on the outside of the subunit, while an extended beta-hairpin is found that lines the wall of the exit tunnel in the center of the 70S ribosome. This chain is Large ribosomal subunit protein uL22, found in Caldivirga maquilingensis (strain ATCC 700844 / DSM 13496 / JCM 10307 / IC-167).